The sequence spans 80 residues: Exodeoxyribonuclease 7 small subunit (80 aa).

It belongs to the XseB family. Heterooligomer composed of large and small subunits.

The protein localises to the cytoplasm. The catalysed reaction is Exonucleolytic cleavage in either 5'- to 3'- or 3'- to 5'-direction to yield nucleoside 5'-phosphates.. Functionally, bidirectionally degrades single-stranded DNA into large acid-insoluble oligonucleotides, which are then degraded further into small acid-soluble oligonucleotides. The polypeptide is Exodeoxyribonuclease 7 small subunit (Lactobacillus helveticus (strain DPC 4571)).